Here is a 306-residue protein sequence, read N- to C-terminus: MKNCTLGNETDNSLISNAFGFLRFPLNFQPYSSDADWVITGVPFDMATSGRAGTRHGPGAIRQISTNLAWEGHRWPWHFDMRERLKVVDCGDLVFNFGDAQDMSDKLQAHTEKLLAAGKRCLTFGGDHFVTLPLLRAHAKHFGKMALVHFDAHTDTYANGSKFDHGTMFYHAPNEGLIDPQHSVQIGIRTEHDTNNGFTVLDAAQVNDRGVDDLVAQIKEIVGSLPVYLTFDIDCLDPAFAPGTGTPVVGGLTTDKALKMLRALQPLNIVGMDLVEVSPAYDQSDITALAGATIALDMLYLQAAKK.

Residues histidine 128, aspartate 151, histidine 153, aspartate 155, aspartate 232, and aspartate 234 each coordinate Mn(2+).

Belongs to the arginase family. Agmatinase subfamily. Mn(2+) is required as a cofactor.

It carries out the reaction agmatine + H2O = urea + putrescine. It functions in the pathway amine and polyamine biosynthesis; putrescine biosynthesis via agmatine pathway; putrescine from agmatine: step 1/1. Functionally, catalyzes the formation of putrescine from agmatine. This Proteus mirabilis protein is Agmatinase (speB).